A 196-amino-acid polypeptide reads, in one-letter code: uncharacterized protein (196 aa).

FAD-binding positions include 15-22 (SQGKFNKT), 68-71 (GWWM), Y107, and 123-126 (TWNA).

It belongs to the oxidoreductase MdaB family. It depends on FAD as a cofactor.

This is an uncharacterized protein from Schizosaccharomyces pombe (strain 972 / ATCC 24843) (Fission yeast).